Here is a 308-residue protein sequence, read N- to C-terminus: Phosphoribosylaminoimidazole-succinocarboxamide synthase (308 aa).

The protein belongs to the SAICAR synthetase family.

The enzyme catalyses 5-amino-1-(5-phospho-D-ribosyl)imidazole-4-carboxylate + L-aspartate + ATP = (2S)-2-[5-amino-1-(5-phospho-beta-D-ribosyl)imidazole-4-carboxamido]succinate + ADP + phosphate + 2 H(+). The protein operates within purine metabolism; IMP biosynthesis via de novo pathway; 5-amino-1-(5-phospho-D-ribosyl)imidazole-4-carboxamide from 5-amino-1-(5-phospho-D-ribosyl)imidazole-4-carboxylate: step 1/2. This is Phosphoribosylaminoimidazole-succinocarboxamide synthase from Stenotrophomonas maltophilia (strain R551-3).